Here is a 264-residue protein sequence, read N- to C-terminus: Major prion protein (264 aa).

The first 24 residues, 1-24, serve as a signal peptide directing secretion; it reads MVKRHIGSWILVLFVVMWSDVGLC. The tract at residues 25–241 is interaction with GRB2, ERI3 and SYN1; it reads KKRPKPGGGW…ESQAYYQRGA (217 aa). Positions 27–119 are disordered; the sequence is RPKPGGGWNT…WNKPSKPKTN (93 aa). 6 consecutive repeat copies span residues 54–62, 63–70, 71–78, 79–86, 87–94, and 95–103. A 6 X 8 AA tandem repeats of P-H-G-G-G-W-G-Q region spans residues 54–103; sequence SQGGGGWGQPHGGGWGQPHGGGWGQPHGGGWGQPHGGGWGQPHGGGGWGQ. Gly residues predominate over residues 55-105; that stretch reads QGGGGWGQPHGGGWGQPHGGGWGQPHGGGWGQPHGGGWGQPHGGGGWGQGG. Positions 72, 73, 74, 80, 81, 82, 88, 89, 90, 96, 98, and 99 each coordinate Cu(2+). The cysteines at positions 190 and 225 are disulfide-linked. N-linked (GlcNAc...) asparagine glycosylation is found at N192 and N208. The GPI-anchor amidated alanine moiety is linked to residue A241. Positions 242-264 are cleaved as a propeptide — removed in mature form; the sequence is SVILFSSPPVILLISLLIFLIVG.

Belongs to the prion family. In terms of assembly, monomer and homodimer. Has a tendency to aggregate into amyloid fibrils containing a cross-beta spine, formed by a steric zipper of superposed beta-strands. Soluble oligomers may represent an intermediate stage on the path to fibril formation. Copper binding may promote oligomerization. Interacts with GRB2, APP, ERI3/PRNPIP and SYN1. Mislocalized cytosolically exposed PrP interacts with MGRN1; this interaction alters MGRN1 subcellular location and causes lysosomal enlargement. Interacts with KIAA1191.

It localises to the cell membrane. The protein resides in the golgi apparatus. Its function is as follows. Its primary physiological function is unclear. Has cytoprotective activity against internal or environmental stresses. May play a role in neuronal development and synaptic plasticity. May be required for neuronal myelin sheath maintenance. May play a role in iron uptake and iron homeostasis. Soluble oligomers are toxic to cultured neuroblastoma cells and induce apoptosis (in vitro). Association with GPC1 (via its heparan sulfate chains) targets PRNP to lipid rafts. Also provides Cu(2+) or Zn(2+) for the ascorbate-mediated GPC1 deaminase degradation of its heparan sulfate side chains. The sequence is that of Major prion protein (PRNP) from Bubalus bubalis (Domestic water buffalo).